Consider the following 518-residue polypeptide: Putative succinate-semialdehyde dehydrogenase [NADP(+)] 2 (518 aa).

Residues 157–158, 181–184, and 232–233 contribute to the NADP(+) site; these read WN, KPDS, and GS. The active-site Proton acceptor is the Glu254. Leu255 lines the NADP(+) pocket. The active-site Nucleophile is the Cys288. NADP(+) is bound at residue Glu386.

This sequence belongs to the aldehyde dehydrogenase family.

It catalyses the reaction succinate semialdehyde + NADP(+) + H2O = succinate + NADPH + 2 H(+). In terms of biological role, catalyzes the NADP(+)-dependent oxidation of succinate semialdehyde to succinate. Although it has succinate semialdehyde dehydrogenase activity, is likely to act physiologically on a different aldehyde(s). The protein is Putative succinate-semialdehyde dehydrogenase [NADP(+)] 2 (gabD2) of Mycobacterium bovis (strain ATCC BAA-935 / AF2122/97).